The primary structure comprises 309 residues: Protein RTM1 (309 aa).

The next 7 helical transmembrane spans lie at 22-42, 83-103, 119-139, 162-182, 193-213, 233-253, and 278-298; these read AIALTVLFIVTTLIYSLQVVW, TFSAFIPLFFGCIMEIVGYIA, IQAVLLLIAPALYAATIYMLF, FFVFGDVVSFCLQAAGGGLMA, LITAGLVIQIVFFGVFIINEF, WWFLNLTLMLSSILIMVRSIV, and AVPMLLAAIVFIVGSFFGNIF.

Belongs to the lipid-translocating exporter (LTE) (TC 9.A.26.1) family.

The protein resides in the membrane. Functionally, confers resistance to molasses (to a particular toxic element present in some molasses). The chain is Protein RTM1 (RTM1) from Saccharomyces cerevisiae (Baker's yeast).